The sequence spans 273 residues: Putative phosphoenolpyruvate synthase regulatory protein (273 aa).

Position 153 to 160 (A153 to T160) interacts with ADP.

The protein belongs to the pyruvate, phosphate/water dikinase regulatory protein family. PSRP subfamily.

It catalyses the reaction [pyruvate, water dikinase] + ADP = [pyruvate, water dikinase]-phosphate + AMP + H(+). The enzyme catalyses [pyruvate, water dikinase]-phosphate + phosphate + H(+) = [pyruvate, water dikinase] + diphosphate. Functionally, bifunctional serine/threonine kinase and phosphorylase involved in the regulation of the phosphoenolpyruvate synthase (PEPS) by catalyzing its phosphorylation/dephosphorylation. In Stenotrophomonas maltophilia (strain K279a), this protein is Putative phosphoenolpyruvate synthase regulatory protein.